The following is a 298-amino-acid chain: tRNA uridine(34) hydroxylase (298 aa).

One can recognise a Rhodanese domain in the interval 123-217 (QNPDVTLVDT…YLEEIPVAES (95 aa)). Cysteine 177 functions as the Cysteine persulfide intermediate in the catalytic mechanism.

It belongs to the TrhO family.

It carries out the reaction uridine(34) in tRNA + AH2 + O2 = 5-hydroxyuridine(34) in tRNA + A + H2O. Functionally, catalyzes oxygen-dependent 5-hydroxyuridine (ho5U) modification at position 34 in tRNAs. This Picosynechococcus sp. (strain ATCC 27264 / PCC 7002 / PR-6) (Agmenellum quadruplicatum) protein is tRNA uridine(34) hydroxylase.